The chain runs to 109 residues: Mitochondrial pyruvate carrier 2 (109 aa).

3 consecutive transmembrane segments (helical) span residues 19 to 35, 51 to 67, and 74 to 90; these read IHFW…IANI, IAVT…STII, and LFSV…YQLT.

It belongs to the mitochondrial pyruvate carrier (MPC) (TC 2.A.105) family.

It is found in the mitochondrion inner membrane. Mediates the uptake of pyruvate into mitochondria. This chain is Mitochondrial pyruvate carrier 2, found in Arabidopsis thaliana (Mouse-ear cress).